The chain runs to 180 residues: Bifunctional protein PyrR (180 aa).

The PRPP-binding motif lies at 101 to 113; the sequence is VILVDDVLYTGRT.

This sequence belongs to the purine/pyrimidine phosphoribosyltransferase family. PyrR subfamily. In terms of assembly, homodimer and homohexamer; in equilibrium.

It carries out the reaction UMP + diphosphate = 5-phospho-alpha-D-ribose 1-diphosphate + uracil. Regulates transcriptional attenuation of the pyrimidine nucleotide (pyr) operon by binding in a uridine-dependent manner to specific sites on pyr mRNA. This disrupts an antiterminator hairpin in the RNA and favors formation of a downstream transcription terminator, leading to a reduced expression of downstream genes. Its function is as follows. Also displays a weak uracil phosphoribosyltransferase activity which is not physiologically significant. This is Bifunctional protein PyrR from Bacillus thuringiensis subsp. konkukian (strain 97-27).